The chain runs to 610 residues: Pentatricopeptide repeat-containing protein At5g40400 (610 aa).

PPR repeat units lie at residues 165 to 199 (DPVV…GFSV), 200 to 234 (SVVT…GIHP), 235 to 269 (NTYT…GFEP), 270 to 304 (DLVT…RVVP), 305 to 339 (DLVT…GIKP), 340 to 374 (DCMS…SVVP), 375 to 409 (DRFT…KVDI), 410 to 445 (PFEV…GHEA), 446 to 480 (KPET…NQVL), 481 to 515 (DAKT…EVKP), 516 to 546 (DSFI…FAME), and 551 to 586 (DPES…GFVP).

This sequence belongs to the PPR family. P subfamily.

This Arabidopsis thaliana (Mouse-ear cress) protein is Pentatricopeptide repeat-containing protein At5g40400.